The following is a 186-amino-acid chain: MNDCSRCAGSTSSGPAHWSGRIRDIADFPKPGIVFKDITPLLSDGPDFASALDEMAQPWRTTPLDAVLGIEARGFILGAALARELRTGFVPVRKPGKLPGRTLIQEYALEYGTDRIEMHEDALPRGARVLIVDDVLATGGTLRAALGLAAQLELEIVGAAVLVELLALQGRSKWLNDVPLLATLSY.

This sequence belongs to the purine/pyrimidine phosphoribosyltransferase family. As to quaternary structure, homodimer.

The protein resides in the cytoplasm. It carries out the reaction AMP + diphosphate = 5-phospho-alpha-D-ribose 1-diphosphate + adenine. It functions in the pathway purine metabolism; AMP biosynthesis via salvage pathway; AMP from adenine: step 1/1. Catalyzes a salvage reaction resulting in the formation of AMP, that is energically less costly than de novo synthesis. In Xanthomonas campestris pv. campestris (strain 8004), this protein is Adenine phosphoribosyltransferase.